The sequence spans 206 residues: Recombination protein RecR (206 aa).

The segment at C58–C73 adopts a C4-type zinc-finger fold. The 98-residue stretch at S81–P178 folds into the Toprim domain.

It belongs to the RecR family.

May play a role in DNA repair. It seems to be involved in an RecBC-independent recombinational process of DNA repair. It may act with RecF and RecO. The sequence is that of Recombination protein RecR from Phytoplasma mali (strain AT).